The following is a 336-amino-acid chain: Methionyl-tRNA formyltransferase (336 aa).

Position 110–113 (110–113) interacts with (6S)-5,6,7,8-tetrahydrofolate; that stretch reads SLLP.

The protein belongs to the Fmt family.

The enzyme catalyses L-methionyl-tRNA(fMet) + (6R)-10-formyltetrahydrofolate = N-formyl-L-methionyl-tRNA(fMet) + (6S)-5,6,7,8-tetrahydrofolate + H(+). In terms of biological role, attaches a formyl group to the free amino group of methionyl-tRNA(fMet). The formyl group appears to play a dual role in the initiator identity of N-formylmethionyl-tRNA by promoting its recognition by IF2 and preventing the misappropriation of this tRNA by the elongation apparatus. The chain is Methionyl-tRNA formyltransferase from Prochlorococcus marinus (strain NATL2A).